The primary structure comprises 326 residues: tRNA-modifying protein YgfZ (326 aa).

The folate site is built by Trp27 and Trp189.

Belongs to the tRNA-modifying YgfZ family.

It localises to the cytoplasm. In terms of biological role, folate-binding protein involved in regulating the level of ATP-DnaA and in the modification of some tRNAs. It is probably a key factor in regulatory networks that act via tRNA modification, such as initiation of chromosomal replication. The chain is tRNA-modifying protein YgfZ from Escherichia coli O6:K15:H31 (strain 536 / UPEC).